Consider the following 276-residue polypeptide: Diaminopimelate epimerase (276 aa).

The substrate site is built by asparagine 13, glutamine 46, and asparagine 66. The active-site Proton donor is the cysteine 75. Residues 76–77 (GN), asparagine 159, asparagine 192, and 210–211 (ER) contribute to the substrate site. The Proton acceptor role is filled by cysteine 219. Residue 220–221 (GS) coordinates substrate.

The protein belongs to the diaminopimelate epimerase family. Homodimer.

Its subcellular location is the cytoplasm. The enzyme catalyses (2S,6S)-2,6-diaminopimelate = meso-2,6-diaminopimelate. Its pathway is amino-acid biosynthesis; L-lysine biosynthesis via DAP pathway; DL-2,6-diaminopimelate from LL-2,6-diaminopimelate: step 1/1. In terms of biological role, catalyzes the stereoinversion of LL-2,6-diaminopimelate (L,L-DAP) to meso-diaminopimelate (meso-DAP), a precursor of L-lysine and an essential component of the bacterial peptidoglycan. In Vibrio atlanticus (strain LGP32) (Vibrio splendidus (strain Mel32)), this protein is Diaminopimelate epimerase.